A 197-amino-acid polypeptide reads, in one-letter code: Nucleoid occlusion factor SlmA (197 aa).

Positions 7–67 (INRREHILQC…GLIEFIEESL (61 aa)) constitute an HTH tetR-type domain. Positions 30–49 (TTAKLASEVGVSEAALYRHF) form a DNA-binding region, H-T-H motif.

This sequence belongs to the nucleoid occlusion factor SlmA family. Homodimer. Interacts with FtsZ.

It is found in the cytoplasm. It localises to the nucleoid. Functionally, required for nucleoid occlusion (NO) phenomenon, which prevents Z-ring formation and cell division over the nucleoid. Acts as a DNA-associated cell division inhibitor that binds simultaneously chromosomal DNA and FtsZ, and disrupts the assembly of FtsZ polymers. SlmA-DNA-binding sequences (SBS) are dispersed on non-Ter regions of the chromosome, preventing FtsZ polymerization at these regions. This is Nucleoid occlusion factor SlmA from Shewanella sp. (strain MR-7).